Here is a 165-residue protein sequence, read N- to C-terminus: uncharacterized protein (165 aa).

A helical transmembrane segment spans residues 10–27 (VSLTIVFVLFFSADVSLT).

Its subcellular location is the membrane. This is an uncharacterized protein from Saccharomyces cerevisiae (strain ATCC 204508 / S288c) (Baker's yeast).